We begin with the raw amino-acid sequence, 112 residues long: Ribosomal processing cysteine protease Prp (112 aa).

The Proton donor role is filled by histidine 22. The active-site Nucleophile is the cysteine 34.

It belongs to the Prp family. As to quaternary structure, homodimer.

Its function is as follows. An essential cysteine protease that cleaves the N-terminus from ribosomal protein bL27. The sequence is that of Ribosomal processing cysteine protease Prp from Bacillus subtilis (strain 168).